Here is a 71-residue protein sequence, read N- to C-terminus: Peptide Ctri10261 (71 aa).

The first 23 residues, 1–23 (MKIPLILVTIAIILLMVPTESDA), serve as a signal peptide directing secretion. F37 carries the phenylalanine amide modification. The propeptide occupies 41 to 71 (SLKNRDYFDYMQDPSLSNADLRELEELLEDY).

Belongs to the non-disulfide-bridged peptide (NDBP) superfamily. Short antimicrobial peptide (group 4) family. As to expression, expressed by the venom gland.

The protein localises to the secreted. In terms of biological role, antimicrobial peptide. This Chaerilus tricostatus (Scorpion) protein is Peptide Ctri10261.